We begin with the raw amino-acid sequence, 312 residues long: Coiled-coil domain-containing protein 42 homolog (312 aa).

2 coiled-coil regions span residues 34-121 (RLLE…RLKE) and 172-233 (ATHQ…WESQ).

It belongs to the CFAP73 family.

The chain is Coiled-coil domain-containing protein 42 homolog from Nematostella vectensis (Starlet sea anemone).